The chain runs to 207 residues: Octanoyltransferase (207 aa).

Positions 27 to 203 (ADTEDELWVV…HLETQFTPKA (177 aa)) constitute a BPL/LPL catalytic domain. Residues 66–73 (RGGQITYH), 133–135 (SLG), and 146–148 (GLA) contribute to the substrate site. Cysteine 164 serves as the catalytic Acyl-thioester intermediate.

This sequence belongs to the LipB family.

It localises to the cytoplasm. It carries out the reaction octanoyl-[ACP] + L-lysyl-[protein] = N(6)-octanoyl-L-lysyl-[protein] + holo-[ACP] + H(+). Its pathway is protein modification; protein lipoylation via endogenous pathway; protein N(6)-(lipoyl)lysine from octanoyl-[acyl-carrier-protein]: step 1/2. Functionally, catalyzes the transfer of endogenously produced octanoic acid from octanoyl-acyl-carrier-protein onto the lipoyl domains of lipoate-dependent enzymes. Lipoyl-ACP can also act as a substrate although octanoyl-ACP is likely to be the physiological substrate. The chain is Octanoyltransferase from Neisseria meningitidis serogroup B (strain ATCC BAA-335 / MC58).